The chain runs to 216 residues: Probable nicotinate-nucleotide adenylyltransferase (216 aa).

Belongs to the NadD family.

It carries out the reaction nicotinate beta-D-ribonucleotide + ATP + H(+) = deamido-NAD(+) + diphosphate. It participates in cofactor biosynthesis; NAD(+) biosynthesis; deamido-NAD(+) from nicotinate D-ribonucleotide: step 1/1. Its function is as follows. Catalyzes the reversible adenylation of nicotinate mononucleotide (NaMN) to nicotinic acid adenine dinucleotide (NaAD). The chain is Probable nicotinate-nucleotide adenylyltransferase from Geobacillus kaustophilus (strain HTA426).